A 141-amino-acid chain; its full sequence is Putative pre-16S rRNA nuclease (141 aa).

Belongs to the YqgF nuclease family.

Its subcellular location is the cytoplasm. Its function is as follows. Could be a nuclease involved in processing of the 5'-end of pre-16S rRNA. The chain is Putative pre-16S rRNA nuclease from Roseiflexus sp. (strain RS-1).